We begin with the raw amino-acid sequence, 264 residues long: 3-methyl-2-oxobutanoate hydroxymethyltransferase (264 aa).

Residues D45 and D84 each contribute to the Mg(2+) site. 3-methyl-2-oxobutanoate is bound by residues 45 to 46, D84, and K112; that span reads DS. Position 114 (E114) interacts with Mg(2+). The active-site Proton acceptor is E181.

It belongs to the PanB family. As to quaternary structure, homodecamer; pentamer of dimers. Mg(2+) serves as cofactor.

It localises to the cytoplasm. The catalysed reaction is 3-methyl-2-oxobutanoate + (6R)-5,10-methylene-5,6,7,8-tetrahydrofolate + H2O = 2-dehydropantoate + (6S)-5,6,7,8-tetrahydrofolate. The protein operates within cofactor biosynthesis; (R)-pantothenate biosynthesis; (R)-pantoate from 3-methyl-2-oxobutanoate: step 1/2. Its function is as follows. Catalyzes the reversible reaction in which hydroxymethyl group from 5,10-methylenetetrahydrofolate is transferred onto alpha-ketoisovalerate to form ketopantoate. This chain is 3-methyl-2-oxobutanoate hydroxymethyltransferase, found in Shewanella sp. (strain MR-4).